The chain runs to 74 residues: Cytochrome c oxidase copper chaperone 1 (74 aa).

Positions 1-30 (MTDQPAQNGLIPPPTSEPSKAAASAETKPK) are disordered. Cu cation-binding residues include cysteine 34 and cysteine 35. The region spanning 34 to 74 (CCACPDTKKLRDECIVEHGESACTKWIEAHKICLRAEGFNV) is the CHCH domain. 2 consecutive short sequence motifs (cx9C motif) follow at residues 37-47 (CPDTKKLRDEC) and 56-66 (CTKWIEAHKIC). Intrachain disulfides connect cysteine 37/cysteine 66 and cysteine 47/cysteine 56.

This sequence belongs to the COX17 family.

The protein resides in the mitochondrion intermembrane space. Copper chaperone for cytochrome c oxidase (COX). Binds 2 copper ions and delivers them to the Cu(A) site of COX. Can complement the yeast mutant cox17. In Arabidopsis thaliana (Mouse-ear cress), this protein is Cytochrome c oxidase copper chaperone 1 (COX17-1).